The sequence spans 104 residues: MRFFSYLGLLLAGLTSLQGFSTDNLLEEELRYWCQYVKNCRFCWTCQDGLCKNKVLKDMSSVQEHSYPMEHCMIHRQCKYIRDGPIFQVECTMQTSDATHLINA.

The signal sequence occupies residues 1–31 (MRFFSYLGLLLAGLTSLQGFSTDNLLEEELR).

It belongs to the asfivirus MGF 110 family.

Plays a role in virus cell tropism, and may be required for efficient virus replication in macrophages. The protein is Protein MGF 110-2L of African swine fever virus (strain Badajoz 1971 Vero-adapted) (Ba71V).